Here is a 152-residue protein sequence, read N- to C-terminus: Methylglyoxal synthase (152 aa).

The MGS-like domain occupies 6–152 (RTMATAKNIA…YQHYLNGRLK (147 aa)). Residues H19, K23, 45 to 48 (TGTT), and 65 to 66 (SG) each bind substrate. Catalysis depends on D71, which acts as the Proton donor/acceptor. H98 serves as a coordination point for substrate.

The protein belongs to the methylglyoxal synthase family.

It carries out the reaction dihydroxyacetone phosphate = methylglyoxal + phosphate. Catalyzes the formation of methylglyoxal from dihydroxyacetone phosphate. The protein is Methylglyoxal synthase of Photorhabdus laumondii subsp. laumondii (strain DSM 15139 / CIP 105565 / TT01) (Photorhabdus luminescens subsp. laumondii).